Here is a 406-residue protein sequence, read N- to C-terminus: Probable endo-xylogalacturonan hydrolase A (406 aa).

The signal sequence occupies residues 1-18 (MLYPRNLALFSLLSLSSA). PbH1 repeat units follow at residues 183 to 213 (TQHVTFKNLRMDATSNSQNPPKNTDGFDIGA), 214 to 235 (STHVTISSVSVTNDDDCVAFKP), 237 to 257 (SNYVTVEDVTCTGSHGISVGS), and 299 to 320 (VKNVTFSDFNVRGCDYAFQIES). The Proton donor role is filled by Asp228. The active site involves His251. Asn301 carries an N-linked (GlcNAc...) asparagine glycan.

The protein belongs to the glycosyl hydrolase 28 family.

The protein resides in the secreted. Functionally, pectinolytic enzyme involved in the degradation of xylogalacturonan (xga), a galacturonan backbone heavily substituted with xylose, and which is one important component of the hairy regions of pectin. Activity requires a galacturonic acid backbone substituted with xylose. The polypeptide is Probable endo-xylogalacturonan hydrolase A (xghA) (Aspergillus fumigatus (strain CBS 144.89 / FGSC A1163 / CEA10) (Neosartorya fumigata)).